Reading from the N-terminus, the 144-residue chain is Ribosome maturation factor RimP (144 aa).

This sequence belongs to the RimP family.

It is found in the cytoplasm. Functionally, required for maturation of 30S ribosomal subunits. The sequence is that of Ribosome maturation factor RimP from Methylobacillus flagellatus (strain ATCC 51484 / DSM 6875 / VKM B-1610 / KT).